Here is a 163-residue protein sequence, read N- to C-terminus: MSCRGRGAGGRWNSTSWSTGCKLPASPRRVSRCSPTGLIKLAFLFSKTRCKFFSLTETPEDYTIIVDEEGFLELPSSEHLSVADATWLALNVVSGGGSFSSSQPIGMTKIAKSVIAPLADQNISVFMLSTYQTDFILVLKRDLPFVTHTLSSEFTILWSVARL.

It belongs to the GATS family.

The sequence is that of Putative protein CASTOR3P from Homo sapiens (Human).